A 289-amino-acid chain; its full sequence is UDP-3-O-acyl-N-acetylglucosamine deacetylase (289 aa).

3 residues coordinate Zn(2+): His-79, His-236, and Asp-240. The active-site Proton donor is the His-263.

The protein belongs to the LpxC family. Requires Zn(2+) as cofactor.

It carries out the reaction a UDP-3-O-[(3R)-3-hydroxyacyl]-N-acetyl-alpha-D-glucosamine + H2O = a UDP-3-O-[(3R)-3-hydroxyacyl]-alpha-D-glucosamine + acetate. It participates in glycolipid biosynthesis; lipid IV(A) biosynthesis; lipid IV(A) from (3R)-3-hydroxytetradecanoyl-[acyl-carrier-protein] and UDP-N-acetyl-alpha-D-glucosamine: step 2/6. Its function is as follows. Catalyzes the hydrolysis of UDP-3-O-myristoyl-N-acetylglucosamine to form UDP-3-O-myristoylglucosamine and acetate, the committed step in lipid A biosynthesis. This Rickettsia typhi (strain ATCC VR-144 / Wilmington) protein is UDP-3-O-acyl-N-acetylglucosamine deacetylase.